The primary structure comprises 82 residues: KKEKEQGCYEDFIECLKLYDKEENGTMMLAELQHALLALGESLDDEQVETLFADCMDPEDDEGFIPYSQFVQRLMSDPVVFD.

Residues 7–42 (GCYEDFIECLKLYDKEENGTMMLAELQHALLALGES) enclose the EF-hand domain.

Myosin is a hexamer of 2 heavy chains and 4 light chains.

The protein is Myosin light chain alkali (Mlc1) of Drosophila mauritiana (Fruit fly).